The following is a 299-amino-acid chain: Biotin transporter (299 aa).

10 helical membrane-spanning segments follow: residues 2-22 (ALLI…GEYL), 26-46 (VDSY…FLPF), 56-76 (TVGL…MLSF), 81-101 (YLTV…ITLI), 110-130 (LRWG…IIRY), 137-157 (FWTG…GMVG), 172-192 (AFAW…FLLG), 202-222 (LQWG…YFMW), 233-253 (TLGI…LAIW), and 256-276 (QPHW…LWVH). EamA domains follow at residues 3 to 128 (LLII…AGII) and 139 to 274 (TGLL…ASLW).

This sequence belongs to the drug/metabolite transporter (DMT) superfamily. 10 TMS drug/metabolite exporter (DME) (TC 2.A.7.3) family.

The protein localises to the cell inner membrane. The catalysed reaction is biotin(in) = biotin(out). Functionally, uptake of biotin. The polypeptide is Biotin transporter (Escherichia coli O157:H7).